Here is a 200-residue protein sequence, read N- to C-terminus: ATP-dependent Clp protease proteolytic subunit (200 aa).

Residue Ser103 is the Nucleophile of the active site. His128 is a catalytic residue.

Belongs to the peptidase S14 family. Fourteen ClpP subunits assemble into 2 heptameric rings which stack back to back to give a disk-like structure with a central cavity, resembling the structure of eukaryotic proteasomes.

The protein localises to the cytoplasm. The enzyme catalyses Hydrolysis of proteins to small peptides in the presence of ATP and magnesium. alpha-casein is the usual test substrate. In the absence of ATP, only oligopeptides shorter than five residues are hydrolyzed (such as succinyl-Leu-Tyr-|-NHMec, and Leu-Tyr-Leu-|-Tyr-Trp, in which cleavage of the -Tyr-|-Leu- and -Tyr-|-Trp bonds also occurs).. Cleaves peptides in various proteins in a process that requires ATP hydrolysis. Has a chymotrypsin-like activity. Plays a major role in the degradation of misfolded proteins. In Vibrio vulnificus (strain CMCP6), this protein is ATP-dependent Clp protease proteolytic subunit.